We begin with the raw amino-acid sequence, 223 residues long: Cytidylate kinase (223 aa).

Position 12–20 (12–20 (GPSGVGKGT)) interacts with ATP.

This sequence belongs to the cytidylate kinase family. Type 1 subfamily.

The protein localises to the cytoplasm. The enzyme catalyses CMP + ATP = CDP + ADP. It carries out the reaction dCMP + ATP = dCDP + ADP. This chain is Cytidylate kinase, found in Xylella fastidiosa (strain 9a5c).